The chain runs to 264 residues: Cysteine-rich repeat secretory protein 26 (264 aa).

An N-terminal signal peptide occupies residues 1–27 (MSSNIFGSVPILVVVAIQLLLVHNVSS). Gnk2-homologous domains lie at 34-142 (YLNH…SVDS) and 148-261 (YKRM…LYPF).

It belongs to the cysteine-rich repeat secretory protein family.

It is found in the secreted. The polypeptide is Cysteine-rich repeat secretory protein 26 (CRRSP26) (Arabidopsis thaliana (Mouse-ear cress)).